The following is a 339-amino-acid chain: Agamous-like MADS-box protein AGL86 (339 aa).

In terms of domain architecture, MADS-box spans 1–60 (MRSKIKLSLIANKTSRRTTFRKRKGGITNKLHELTTLCGVKACAVISSPYENPVVWPSTE). Positions 86–112 (TYLQDKITKETKKLESLRRENRESQLR) form a coiled coil.

In terms of assembly, interacts with AGL61/DIANA and AGL62.

The protein resides in the nucleus. Probable transcription factor. In Arabidopsis thaliana (Mouse-ear cress), this protein is Agamous-like MADS-box protein AGL86 (AGL86).